The sequence spans 403 residues: Aspartic endopeptidase PEP1 (403 aa).

The signal sequence occupies residues 1–20 (MVQISQIGAVLAVCSTLTVA). A propeptide spans 21 to 67 (APTKGKARFNVPQVAVPMKAVHHPAVAYARALHKFGMKVPKAVSDAA) (activation peptide). Positions 82–400 (YVTQVTVGQG…DTEGPRIGFA (319 aa)) constitute a Peptidase A1 domain. Residue Asp-98 is part of the active site. 2 N-linked (GlcNAc...) asparagine glycosylation sites follow: Asn-159 and Asn-270. Asp-293 is a catalytic residue. Cys-329 and Cys-361 are disulfide-bonded.

Belongs to the peptidase A1 family.

The protein resides in the secreted. It carries out the reaction Hydrolysis of proteins with broad specificity. Generally favors hydrophobic residues in P1 and P1', but also accepts Lys in P1, which leads to activation of trypsinogen. Does not clot milk.. In terms of biological role, secreted aspartic endopeptidase that allows assimilation of proteinaceous substrates. Can catalyze hydrolysis of the major structural proteins of basement membrane, elastin, collagen, and laminin. Thought to play a significant role in virulence. Its function is as follows. Can catalyze hydrolysis of the major structural proteins of basement membrane, elastin, collagen, and laminin. Thought to play a significant role in virulence. In Trichophyton verrucosum (strain HKI 0517), this protein is Aspartic endopeptidase PEP1 (PEP1).